A 144-amino-acid chain; its full sequence is Large ribosomal subunit protein uL15 (144 aa).

The disordered stretch occupies residues 1–53 (MRLNTLSPAEGAKHSAKRLGRGIGSGLGKTGGRGHKGQKSRTGGGVRRGFEGG). Over residues 21-31 (RGIGSGLGKTG) the composition is skewed to gly residues.

The protein belongs to the universal ribosomal protein uL15 family. In terms of assembly, part of the 50S ribosomal subunit.

Functionally, binds to the 23S rRNA. The chain is Large ribosomal subunit protein uL15 from Haemophilus influenzae (strain ATCC 51907 / DSM 11121 / KW20 / Rd).